Reading from the N-terminus, the 304-residue chain is GTPase Era (304 aa).

The region spanning 11–186 is the Era-type G domain; the sequence is YCGFIAIVGR…LRKGVHHFPE (176 aa). Residues 19–26 are G1; sequence GRPNVGKS. 19-26 is a binding site for GTP; it reads GRPNVGKS. Residues 45-49 are G2; that stretch reads QTTRH. The tract at residues 66-69 is G3; the sequence is DTPG. GTP is bound by residues 66 to 70 and 128 to 131; these read DTPGL and NKVD. The segment at 128 to 131 is G4; it reads NKVD. The G5 stretch occupies residues 158-160; the sequence is ISA. The KH type-2 domain maps to 210-287; sequence TGEELPYSVT…HLELWVKVKS (78 aa).

The protein belongs to the TRAFAC class TrmE-Era-EngA-EngB-Septin-like GTPase superfamily. Era GTPase family. In terms of assembly, monomer.

It localises to the cytoplasm. Its subcellular location is the cell inner membrane. In terms of biological role, an essential GTPase that binds both GDP and GTP, with rapid nucleotide exchange. Plays a role in 16S rRNA processing and 30S ribosomal subunit biogenesis and possibly also in cell cycle regulation and energy metabolism. The chain is GTPase Era from Histophilus somni (strain 2336) (Haemophilus somnus).